Reading from the N-terminus, the 108-residue chain is UPF0145 protein LCA_1282 (108 aa).

This sequence belongs to the UPF0145 family.

In Latilactobacillus sakei subsp. sakei (strain 23K) (Lactobacillus sakei subsp. sakei), this protein is UPF0145 protein LCA_1282.